The chain runs to 200 residues: ATP-dependent Clp protease proteolytic subunit (200 aa).

The active-site Nucleophile is Ser104. His129 is an active-site residue.

This sequence belongs to the peptidase S14 family. As to quaternary structure, fourteen ClpP subunits assemble into 2 heptameric rings which stack back to back to give a disk-like structure with a central cavity, resembling the structure of eukaryotic proteasomes.

The protein localises to the cytoplasm. It carries out the reaction Hydrolysis of proteins to small peptides in the presence of ATP and magnesium. alpha-casein is the usual test substrate. In the absence of ATP, only oligopeptides shorter than five residues are hydrolyzed (such as succinyl-Leu-Tyr-|-NHMec, and Leu-Tyr-Leu-|-Tyr-Trp, in which cleavage of the -Tyr-|-Leu- and -Tyr-|-Trp bonds also occurs).. Its function is as follows. Cleaves peptides in various proteins in a process that requires ATP hydrolysis. Has a chymotrypsin-like activity. Plays a major role in the degradation of misfolded proteins. In Rubrobacter xylanophilus (strain DSM 9941 / JCM 11954 / NBRC 16129 / PRD-1), this protein is ATP-dependent Clp protease proteolytic subunit.